Consider the following 396-residue polypeptide: ATP-dependent RNA helicase eIF4A (396 aa).

The short motif at 22–50 (YSFDDLNLKPNIVRGIFGYGYESPSAIQQ) is the Q motif element. Residues 53–223 (ILPITEGRDV…TKFMNNPVRI (171 aa)) enclose the Helicase ATP-binding domain. 66–73 (AQSGTGKT) contacts ATP. The DEAD box motif lies at 171 to 174 (DEAD). The Helicase C-terminal domain occupies 234-395 (GIKQFYINVE…EMPANIGELF (162 aa)).

Belongs to the DEAD box helicase family. eIF4A subfamily. As to quaternary structure, component of the eIF4F complex, which composition varies with external and internal environmental conditions. It is composed of at least eIF4A, eIF4E and eIF4G.

The protein resides in the cytoplasm. It catalyses the reaction ATP + H2O = ADP + phosphate + H(+). In terms of biological role, ATP-dependent RNA helicase which is a subunit of the eIF4F complex involved in cap recognition and is required for mRNA binding to ribosome. In the current model of translation initiation, eIF4A unwinds RNA secondary structures in the 5'-UTR of mRNAs which is necessary to allow efficient binding of the small ribosomal subunit, and subsequent scanning for the initiator codon. This chain is ATP-dependent RNA helicase eIF4A (TIF1), found in Meyerozyma guilliermondii (strain ATCC 6260 / CBS 566 / DSM 6381 / JCM 1539 / NBRC 10279 / NRRL Y-324) (Yeast).